We begin with the raw amino-acid sequence, 290 residues long: Agroclavine dehydrogenase (290 aa).

The protein belongs to the fgaFS/easG family. Monomer.

The enzyme catalyses agroclavine + NADP(+) = didehydroagroclavine + NADPH + H(+). Its pathway is alkaloid biosynthesis; ergot alkaloid biosynthesis. In terms of biological role, agroclavine dehydrogenase; part of the gene cluster that mediates the biosynthesis of fungal ergot alkaloid. DmaW catalyzes the first step of ergot alkaloid biosynthesis by condensing dimethylallyl diphosphate (DMAP) and tryptophan to form 4-dimethylallyl-L-tryptophan. The second step is catalyzed by the methyltransferase easF that methylates 4-dimethylallyl-L-tryptophan in the presence of S-adenosyl-L-methionine, resulting in the formation of 4-dimethylallyl-L-abrine. The catalase easC and the FAD-dependent oxidoreductase easE then transform 4-dimethylallyl-L-abrine to chanoclavine-I which is further oxidized by easD in the presence of NAD(+), resulting in the formation of chanoclavine-I aldehyde. Agroclavine dehydrogenase easG then mediates the conversion of chanoclavine-I aldehyde to agroclavine via a non-enzymatic adduct reaction: the substrate is an iminium intermediate that is formed spontaneously from chanoclavine-I aldehyde in the presence of glutathione. The presence of easA is not required to complete this reaction. Further conversion of agroclavine to paspalic acid is a two-step process involving oxidation of agroclavine to elymoclavine and of elymoclavine to paspalic acid, the second step being performed by the elymoclavine oxidase cloA. Paspalic acid is then further converted to D-lysergic acid. Ergopeptines are assembled from D-lysergic acid and three different amino acids by the D-lysergyl-peptide-synthetases composed each of a monomudular and a trimodular nonribosomal peptide synthetase subunit. LpsB and lpsC encode the monomodular subunits responsible for D-lysergic acid activation and incorporation into the ergopeptine backbone. LpsA1 and A2 subunits encode the trimodular nonribosomal peptide synthetase assembling the tripeptide portion of ergopeptines. LpsA1 is responsible for formation of the major ergopeptine, ergotamine, and lpsA2 for alpha-ergocryptine, the minor ergopeptine of the total alkaloid mixture elaborated by C.purpurea. D-lysergyl-tripeptides are assembled by the nonribosomal peptide synthetases and released as N-(D-lysergyl-aminoacyl)-lactams. Cyclolization of the D-lysergyl-tripeptides is performed by the Fe(2+)/2-ketoglutarate-dependent dioxygenase easH which introduces a hydroxyl group into N-(D-lysergyl-aminoacyl)-lactam at alpha-C of the aminoacyl residue followed by spontaneous condensation with the terminal lactam carbonyl group. This is Agroclavine dehydrogenase from Claviceps purpurea (Ergot fungus).